The primary structure comprises 574 residues: Ribonuclease Y (574 aa).

A helical transmembrane segment spans residues 1–21 (MSLLDLVLLLLVLGLGGVLLL). One can recognise a KH domain in the interval 264-327 (AVTVVPIPSD…EIARMALEEL (64 aa)). Residues 390 to 483 (VLKHSIQVAH…VAAADALSAA (94 aa)) form the HD domain.

Belongs to the RNase Y family.

Its subcellular location is the cell membrane. Endoribonuclease that initiates mRNA decay. In Thermus thermophilus (strain ATCC BAA-163 / DSM 7039 / HB27), this protein is Ribonuclease Y.